We begin with the raw amino-acid sequence, 236 residues long: Phycocyanobilin:ferredoxin oxidoreductase (236 aa).

The protein belongs to the HY2 family.

The enzyme catalyses (2R,3Z)-phycocyanobilin + 4 oxidized [2Fe-2S]-[ferredoxin] = biliverdin IXalpha + 4 reduced [2Fe-2S]-[ferredoxin] + 4 H(+). Functionally, catalyzes the four-electron reduction of biliverdin IX-alpha (2-electron reduction at both the A and D rings); the reaction proceeds via an isolatable 2-electron intermediate, 181,182-dihydrobiliverdin. The polypeptide is Phycocyanobilin:ferredoxin oxidoreductase (pcyA) (Thermosynechococcus vestitus (strain NIES-2133 / IAM M-273 / BP-1)).